We begin with the raw amino-acid sequence, 1075 residues long: Putative type I restriction enzyme MjaVIIP endonuclease subunit (1075 aa).

This sequence belongs to the HsdR family. The type I restriction/modification system is composed of three polypeptides R, M and S.

The enzyme catalyses Endonucleolytic cleavage of DNA to give random double-stranded fragments with terminal 5'-phosphates, ATP is simultaneously hydrolyzed.. In terms of biological role, the restriction (R) subunit of a type I restriction enzyme that recognizes 5'-CAAN(7)TGG-3' and cleaves a random distance away. The R subunit is required for both endonuclease and ATPase activities but not for modification. After locating a non-methylated recognition site, the enzyme complex serves as a molecular motor that translocates DNA in an ATP-dependent manner until a collision occurs that triggers cleavage. The chain is Putative type I restriction enzyme MjaVIIP endonuclease subunit from Methanocaldococcus jannaschii (strain ATCC 43067 / DSM 2661 / JAL-1 / JCM 10045 / NBRC 100440) (Methanococcus jannaschii).